Here is a 202-residue protein sequence, read N- to C-terminus: Mevalonate-3-phosphate 5-kinase (202 aa).

It carries out the reaction (R)-3-phosphomevalonate + ATP = (R)-3,5-bisphosphomevalonate + ADP + H(+). It functions in the pathway isoprenoid biosynthesis; isopentenyl diphosphate biosynthesis via mevalonate pathway. Phosphorylates mevalonate 3-phosphate to form mevalonate 3,5-bisphosphate. Functions in an alternative mevalonate pathway, only present in extreme acidophiles of the Thermoplasmatales order, which passes through mevalonate 3-phosphate rather than mevalonate 5-phosphate. The protein is Mevalonate-3-phosphate 5-kinase of Thermoplasma acidophilum (strain ATCC 25905 / DSM 1728 / JCM 9062 / NBRC 15155 / AMRC-C165).